A 549-amino-acid chain; its full sequence is T-complex protein 1 subunit theta (549 aa).

Belongs to the TCP-1 chaperonin family. Heterooligomeric complex of about 850 to 900 kDa that forms two stacked rings, 12 to 16 nm in diameter. Interacts with CCT3, KNAT1, STM and TTG1. In terms of tissue distribution, expressed in shoot meristems, root tip, vasculature and leaf epidermis.

The protein localises to the cytoplasm. In terms of biological role, molecular chaperone; assists the folding of proteins upon ATP hydrolysis. Known to play a role, in vitro, in the folding of actin and tubulin. Contributes to stem cell maintenance through its impact on transcription factors trafficking through plasmodesmata. Probably involved in refolding translocated, partially unfolded proteins, including viral movement proteins. The sequence is that of T-complex protein 1 subunit theta from Arabidopsis thaliana (Mouse-ear cress).